We begin with the raw amino-acid sequence, 124 residues long: MATINQLVRKPRQASTYKSASPALDKCPQRRGVCTRVYTSTPKKPNSALRKVAKVRLTNQEEVISYIGGEGHNLQEHSVVLIRGGRVKDLPGVRYHTVRGSLDAAGVAKRRQGRSKYGAKRPKS.

Residues methionine 1–aspartate 25 are disordered.

This sequence belongs to the universal ribosomal protein uS12 family. As to quaternary structure, part of the 30S ribosomal subunit. Contacts proteins S8 and S17. May interact with IF1 in the 30S initiation complex.

In terms of biological role, with S4 and S5 plays an important role in translational accuracy. Interacts with and stabilizes bases of the 16S rRNA that are involved in tRNA selection in the A site and with the mRNA backbone. Located at the interface of the 30S and 50S subunits, it traverses the body of the 30S subunit contacting proteins on the other side and probably holding the rRNA structure together. The combined cluster of proteins S8, S12 and S17 appears to hold together the shoulder and platform of the 30S subunit. The sequence is that of Small ribosomal subunit protein uS12 from Xylella fastidiosa (strain 9a5c).